Consider the following 548-residue polypeptide: Luciferin 4-monooxygenase (548 aa).

The Microbody targeting signal motif lies at 546 to 548 (AKM).

This sequence belongs to the ATP-dependent AMP-binding enzyme family. Mg(2+) serves as cofactor.

It localises to the peroxisome. It carries out the reaction firefly D-luciferin + ATP + O2 = firefly oxyluciferin + hnu + AMP + CO2 + diphosphate. In terms of biological role, produces green light with a wavelength of 544 nm. In Nipponoluciola cruciata (Genji firefly), this protein is Luciferin 4-monooxygenase.